Consider the following 69-residue polypeptide: MASYRNSRSRSRSRFRRRRRGRSRVRGRDARQGRSSRRRRRGKGRAHSGKKGRRSGSRRRKRNNNTENK.

Positions 1 to 69 are disordered; sequence MASYRNSRSR…RKRNNNTENK (69 aa). Composition is skewed to basic residues over residues 7–25 and 34–63; these read SRSR…RSRV and RSSR…RKRN.

It belongs to the protamine P1 family. In terms of tissue distribution, testis.

Its subcellular location is the nucleus. The protein localises to the chromosome. In terms of biological role, protamines substitute for histones in the chromatin of sperm during the haploid phase of spermatogenesis. They compact sperm DNA into a highly condensed, stable and inactive complex. This chain is Sperm protamine P1 (PRM1), found in Perameles gunnii (Eastern barred bandicoot).